The primary structure comprises 89 residues: Small ribosomal subunit protein uS15 (89 aa).

It belongs to the universal ribosomal protein uS15 family. In terms of assembly, part of the 30S ribosomal subunit. Forms a bridge to the 50S subunit in the 70S ribosome, contacting the 23S rRNA.

One of the primary rRNA binding proteins, it binds directly to 16S rRNA where it helps nucleate assembly of the platform of the 30S subunit by binding and bridging several RNA helices of the 16S rRNA. In terms of biological role, forms an intersubunit bridge (bridge B4) with the 23S rRNA of the 50S subunit in the ribosome. This is Small ribosomal subunit protein uS15 from Thermodesulfovibrio yellowstonii (strain ATCC 51303 / DSM 11347 / YP87).